We begin with the raw amino-acid sequence, 176 residues long: Membrane-anchored junction protein (176 aa).

Residues 1–151 (MSLKPFTYPF…QHNSPPPKER (151 aa)) lie on the Nuclear side of the membrane. Positions 59 to 150 (AVMRKRKHMD…LQHNSPPPKE (92 aa)) are disordered. Basic and acidic residues predominate over residues 95–107 (PPVETRRNRERKT). Over residues 108–120 (QQGLQETLASDIT) the composition is skewed to polar residues. A helical membrane pass occupies residues 152–170 (AATGFFGFLSSLFPFRYFF). Over 171-176 (RKSSHS) the chain is Perinuclear space.

The protein belongs to the MAJIN family. In terms of assembly, component of the MAJIN-TERB1-TERB2 complex, composed of MAJIN, TERB1 and TERB2.

The protein resides in the nucleus inner membrane. Its subcellular location is the chromosome. The protein localises to the telomere. Its function is as follows. Meiosis-specific telomere-associated protein involved in meiotic telomere attachment to the nucleus inner membrane, a crucial step for homologous pairing and synapsis. Component of the MAJIN-TERB1-TERB2 complex, which promotes telomere cap exchange by mediating attachment of telomeric DNA to the inner nuclear membrane and replacement of the protective cap of telomeric chromosomes: in early meiosis, the MAJIN-TERB1-TERB2 complex associates with telomeric DNA and the shelterin/telosome complex. During prophase, the complex matures and promotes release of the shelterin/telosome complex from telomeric DNA. In the complex, MAJIN acts as the anchoring subunit to the nucleus inner membrane. MAJIN shows DNA-binding activity, possibly for the stabilization of telomere attachment on the nucleus inner membrane. This Homo sapiens (Human) protein is Membrane-anchored junction protein.